A 621-amino-acid chain; its full sequence is Complex I assembly factor ACAD9, mitochondrial (621 aa).

The transit peptide at 1-37 (MSGCGLFLRTTAAARACRGLVVSTANRRLLRTSPPVR) directs the protein to the mitochondrion. Residue lysine 41 is modified to N6-acetyllysine. Lysine 92 bears the N6-succinyllysine mark. Glutamate 426 acts as the Proton acceptor in catalysis. At threonine 478 the chain carries Phosphothreonine. N6-acetyllysine; alternate is present on lysine 521. Lysine 521 is modified (N6-succinyllysine; alternate).

This sequence belongs to the acyl-CoA dehydrogenase family. Homodimer. Interacts with NDUFAF1 and ECSIT. Part of the mitochondrial complex I assembly/MCIA complex that comprises at least the core subunits TMEM126B, NDUFAF1, ECSIT and ACAD9 and complement subunits such as COA1 and TMEM186. Interacts with TMEM70 and TMEM242. The cofactor is FAD. Ubiquitously expressed in most normal human tissues and cancer cell lines with high level of expression in heart, skeletal muscles, brain, kidney and liver. In the cerebellum uniquely expressed in the granular layer (at protein level).

The protein resides in the mitochondrion inner membrane. The enzyme catalyses eicosanoyl-CoA + oxidized [electron-transfer flavoprotein] + H(+) = (2E)-eicosenoyl-CoA + reduced [electron-transfer flavoprotein]. It carries out the reaction octadecanoyl-CoA + oxidized [electron-transfer flavoprotein] + H(+) = (2E)-octadecenoyl-CoA + reduced [electron-transfer flavoprotein]. It catalyses the reaction oxidized [electron-transfer flavoprotein] + hexadecanoyl-CoA + H(+) = (2E)-hexadecenoyl-CoA + reduced [electron-transfer flavoprotein]. The catalysed reaction is decanoyl-CoA + oxidized [electron-transfer flavoprotein] + H(+) = (2E)-decenoyl-CoA + reduced [electron-transfer flavoprotein]. The enzyme catalyses nonanoyl-CoA + oxidized [electron-transfer flavoprotein] + H(+) = (2E)-nonenoyl-CoA + reduced [electron-transfer flavoprotein]. It carries out the reaction pentadecanoyl-CoA + oxidized [electron-transfer flavoprotein] + H(+) = (2E)-pentadecenoyl-CoA + reduced [electron-transfer flavoprotein]. It catalyses the reaction undecanoyl-CoA + oxidized [electron-transfer flavoprotein] + H(+) = trans-2-undecenoyl-CoA + reduced [electron-transfer flavoprotein]. The catalysed reaction is (9Z)-hexadecenoyl-CoA + oxidized [electron-transfer flavoprotein] + H(+) = (2E,9Z)-hexadecadienoyl-CoA + reduced [electron-transfer flavoprotein]. The enzyme catalyses heptadecanoyl-CoA + oxidized [electron-transfer flavoprotein] + H(+) = trans-2-heptadecenoyl-CoA + reduced [electron-transfer flavoprotein]. It carries out the reaction (9E)-octadecenoyl-CoA + oxidized [electron-transfer flavoprotein] + H(+) = (2E,9E)-octadecadienoyl-CoA + reduced [electron-transfer flavoprotein]. It catalyses the reaction oxidized [electron-transfer flavoprotein] + (9Z)-octadecenoyl-CoA + H(+) = (2E,9Z)-octadecadienoyl-CoA + reduced [electron-transfer flavoprotein]. The catalysed reaction is (9Z,12Z)-octadecadienoyl-CoA + oxidized [electron-transfer flavoprotein] + H(+) = (2E,9Z,12Z)-octadecatrienoyl-CoA + reduced [electron-transfer flavoprotein]. The enzyme catalyses (4Z,7Z,10Z,13Z,16Z,19Z)-docosahexaenoyl-CoA + oxidized [electron-transfer flavoprotein] + H(+) = (2E,4Z,7Z,10Z,13Z,16Z,19Z)-docosaheptaenoyl-CoA + reduced [electron-transfer flavoprotein]. It carries out the reaction tetradecanoyl-CoA + oxidized [electron-transfer flavoprotein] + H(+) = (2E)-tetradecenoyl-CoA + reduced [electron-transfer flavoprotein]. As part of the MCIA complex, primarily participates in the assembly of the mitochondrial complex I and therefore plays a role in oxidative phosphorylation. This moonlighting protein also has a dehydrogenase activity toward a broad range of substrates with greater specificity for long-chain unsaturated acyl-CoAs. However, in vivo, it does not seem to play a primary role in fatty acid oxidation. In addition, the function in complex I assembly is independent of the dehydrogenase activity of the protein. The polypeptide is Complex I assembly factor ACAD9, mitochondrial (Homo sapiens (Human)).